The following is a 485-amino-acid chain: 28S rRNA (uridine-N(3))-methyltransferase (485 aa).

S-adenosyl-L-methionine-binding residues include arginine 296, glycine 318, and asparagine 347.

The protein belongs to the class IV-like SAM-binding methyltransferase superfamily.

It localises to the nucleus. It carries out the reaction uridine in 28S rRNA + S-adenosyl-L-methionine = N(3)-methyluridine in 28S rRNA + S-adenosyl-L-homocysteine + H(+). Functionally, S-adenosyl-L-methionine-dependent methyltransferase that specifically methylates the uridine in position 3485 of 28S rRNA. The chain is 28S rRNA (uridine-N(3))-methyltransferase from Drosophila melanogaster (Fruit fly).